Consider the following 447-residue polypeptide: Phospholipase A(1) DAD1, chloroplastic (447 aa).

A chloroplast-targeting transit peptide spans 1–46 (MRFSLSPVRPHSVVVPSLPKQDVVSYISGTTSNRQCRCVLTLPSPS). The GXSXG signature appears at 293 to 297 (GHSLG). The Acyl-ester intermediate role is filled by serine 295. Active-site charge relay system residues include aspartate 352 and histidine 418.

It belongs to the AB hydrolase superfamily. Lipase family. As to expression, expressed in flower buds, but not in leaves or roots. Restricted to the stamen filaments immediately before flower opening.

Its subcellular location is the plastid. The protein localises to the chloroplast. It carries out the reaction a 1,2-diacyl-sn-glycero-3-phosphocholine + H2O = a 2-acyl-sn-glycero-3-phosphocholine + a fatty acid + H(+). The catalysed reaction is 1-hexadecanoyl-2-(9Z,12Z-octadecadienoyl)-sn-glycero-3-phosphocholine + H2O = 2-(9Z,12Z-octadecadienoyl)-sn-glycero-3-phosphocholine + hexadecanoate + H(+). Functionally, sn-1-specific phospholipase that releases free fatty acids from phospholipids. Low activity on galactolipids and triacylglycerols. Catalyzes the initial step of jasmonic acid biosynthesis. Not essential for jasmonate biosynthesis after wounding or upon pathogen infection. The polypeptide is Phospholipase A(1) DAD1, chloroplastic (Arabidopsis thaliana (Mouse-ear cress)).